Consider the following 177-residue polypeptide: Archaemetzincin (177 aa).

His129 serves as a coordination point for Zn(2+). Glu130 functions as the Proton acceptor in the catalytic mechanism. Residues His133, His139, Cys140, Cys145, Cys164, and Cys167 each coordinate Zn(2+).

Belongs to the peptidase M54 family. In terms of assembly, monomer. It depends on Zn(2+) as a cofactor.

In terms of biological role, probable zinc metalloprotease whose natural substrate is unknown. This chain is Archaemetzincin, found in Sulfolobus acidocaldarius (strain ATCC 33909 / DSM 639 / JCM 8929 / NBRC 15157 / NCIMB 11770).